The primary structure comprises 499 residues: Phenylalanine--tRNA ligase alpha subunit (499 aa).

L-phenylalanine is bound by residues Thr342, Gln381 to Asp383, and Phe422. Mg(2+) is bound at residue Glu424. Phe447 serves as a coordination point for L-phenylalanine.

This sequence belongs to the class-II aminoacyl-tRNA synthetase family. Phe-tRNA synthetase alpha subunit type 2 subfamily. Tetramer of two alpha and two beta subunits. Mg(2+) is required as a cofactor.

It localises to the cytoplasm. It carries out the reaction tRNA(Phe) + L-phenylalanine + ATP = L-phenylalanyl-tRNA(Phe) + AMP + diphosphate + H(+). The polypeptide is Phenylalanine--tRNA ligase alpha subunit (Pyrococcus horikoshii (strain ATCC 700860 / DSM 12428 / JCM 9974 / NBRC 100139 / OT-3)).